Reading from the N-terminus, the 427-residue chain is Enolase (427 aa).

Residue glutamine 163 participates in (2R)-2-phosphoglycerate binding. Glutamate 205 functions as the Proton donor in the catalytic mechanism. Positions 242, 285, and 312 each coordinate Mg(2+). The (2R)-2-phosphoglycerate site is built by lysine 337, arginine 366, serine 367, and lysine 388. Lysine 337 functions as the Proton acceptor in the catalytic mechanism.

This sequence belongs to the enolase family. It depends on Mg(2+) as a cofactor.

Its subcellular location is the cytoplasm. It is found in the secreted. The protein localises to the cell surface. The catalysed reaction is (2R)-2-phosphoglycerate = phosphoenolpyruvate + H2O. It functions in the pathway carbohydrate degradation; glycolysis; pyruvate from D-glyceraldehyde 3-phosphate: step 4/5. In terms of biological role, catalyzes the reversible conversion of 2-phosphoglycerate (2-PG) into phosphoenolpyruvate (PEP). It is essential for the degradation of carbohydrates via glycolysis. The sequence is that of Enolase from Rhodopseudomonas palustris (strain HaA2).